A 239-amino-acid chain; its full sequence is Phosphothreonine lyase OspF (239 aa).

H104 functions as the Proton donor in the catalytic mechanism. K134 functions as the Proton acceptor in the catalytic mechanism.

Belongs to the phosphothreonine lyase family.

It is found in the secreted. Inhibited by the tyrosine phosphatase inhibitor vanadate. Its function is as follows. Catalyzes the removal of the phosphate group from the phosphothreonine in the mitogen-activated protein kinases such as MAPK2/ERK2, MAPK3/ERK1, MAPK8 and MAPK14 in an irreversible reaction, thus preventing the downstream phosphorylation of histone H3. This epigenetic modification results in inhibition of the transcription of a specific subset of pro-inflammatory genes, and ultimately to a reduced immune response against the invading pathogen. The diminished immune response enhances the bacterium's ability to disseminate and multiply within the host. The protein is Phosphothreonine lyase OspF (ospF) of Shigella flexneri.